Consider the following 249-residue polypeptide: Large ribosomal subunit protein uL10m (249 aa).

The N-terminal 31 residues, 1–31 (MLQLRFMPGWVPRNGFFGLKETIGTVHKRFY), are a transit peptide targeting the mitochondrion. The tract at residues 226-249 (SHNDNQKPKEDVESTTDAESKGSK) is disordered.

This sequence belongs to the universal ribosomal protein uL10 family. As to quaternary structure, component of the mitochondrial large ribosomal subunit (mt-LSU). Mature yeast 74S mitochondrial ribosomes consist of a small (37S) and a large (54S) subunit. The 37S small subunit contains a 15S ribosomal RNA (15S mt-rRNA) and 34 different proteins. The 54S large subunit contains a 21S rRNA (21S mt-rRNA) and 46 different proteins.

The protein localises to the mitochondrion. Functionally, component of the mitochondrial ribosome (mitoribosome), a dedicated translation machinery responsible for the synthesis of mitochondrial genome-encoded proteins, including at least some of the essential transmembrane subunits of the mitochondrial respiratory chain. The mitoribosomes are attached to the mitochondrial inner membrane and translation products are cotranslationally integrated into the membrane. The chain is Large ribosomal subunit protein uL10m (MRPL11) from Saccharomyces cerevisiae (strain ATCC 204508 / S288c) (Baker's yeast).